Reading from the N-terminus, the 339-residue chain is Pre-mRNA-splicing factor syf2 (339 aa).

Residues 1-136 are disordered; it reads MPPEKKRKTE…LQSDPSQLTA (136 aa). Residues 7-16 are compositionally biased toward basic and acidic residues; it reads RKTEPEDKAE. The span at 17 to 37 shows a compositional bias: polar residues; the sequence is VTQQENDVAESTTEPNNQTVT. Low complexity predominate over residues 45 to 93; it reads VTEAALATTSSSSPPVLSASETAQPDTAATSQSSSTPPTSTSAAESAAA. Residues 94 to 103 show a composition bias toward basic and acidic residues; sequence KARERAERFR. Positions 126-135 are enriched in polar residues; the sequence is RLQSDPSQLT.

The protein belongs to the SYF2 family. In terms of assembly, associated with the spliceosome.

It is found in the nucleus. Functionally, involved in pre-mRNA splicing. The polypeptide is Pre-mRNA-splicing factor syf2 (msp-4) (Neurospora crassa (strain ATCC 24698 / 74-OR23-1A / CBS 708.71 / DSM 1257 / FGSC 987)).